The following is a 2378-amino-acid chain: Dimodular nonribosomal peptide synthase (2378 aa).

2 consecutive Carrier domains span residues Ala-961–Gln-1036 and Gly-2036–Ser-2111. O-(pantetheine 4'-phosphoryl)serine is present on residues Ser-996 and Ser-2071.

It belongs to the ATP-dependent AMP-binding enzyme family. Pantetheine 4'-phosphate is required as a cofactor.

The enzyme catalyses holo-[peptidyl-carrier protein] + L-threonine + ATP = L-threonyl-[peptidyl-carrier protein] + AMP + diphosphate. It catalyses the reaction holo-[peptidyl-carrier protein] + glycine + ATP = glycyl-[peptidyl-carrier protein] + AMP + diphosphate. It functions in the pathway siderophore biosynthesis; bacillibactin biosynthesis. Specifically adenylates L-threonine and, to a lesser extent, glycine and covalently loads both amino acids onto their corresponding peptidyl carrier domains. The chain is Dimodular nonribosomal peptide synthase (dhbF) from Bacillus subtilis (strain 168).